We begin with the raw amino-acid sequence, 101 residues long: Urease subunit beta (101 aa).

It belongs to the urease beta subunit family. In terms of assembly, heterotrimer of UreA (gamma), UreB (beta) and UreC (alpha) subunits. Three heterotrimers associate to form the active enzyme.

It is found in the cytoplasm. The enzyme catalyses urea + 2 H2O + H(+) = hydrogencarbonate + 2 NH4(+). It participates in nitrogen metabolism; urea degradation; CO(2) and NH(3) from urea (urease route): step 1/1. In Burkholderia ambifaria (strain ATCC BAA-244 / DSM 16087 / CCUG 44356 / LMG 19182 / AMMD) (Burkholderia cepacia (strain AMMD)), this protein is Urease subunit beta.